We begin with the raw amino-acid sequence, 261 residues long: Gap junction beta-6 protein (261 aa).

Residues 1–22 (MDWGTLHTVIGGVNKHSTSIGK) are Cytoplasmic-facing. Residues 23–45 (VWITVIFIFRVMILVVAAQEVWG) form a helical membrane-spanning segment. Over 46–75 (DEQEDFVCNTLQPGCKNVCYDHFFPVSHIR) the chain is Extracellular. Residues 76–98 (LWALQLIFVSTPALLVAMHVAYY) traverse the membrane as a helical segment. Topologically, residues 99–131 (RHETARKFIRGEKRNEFKDLEDIKRQKVRIEGS) are cytoplasmic. The helical transmembrane segment at 132–154 (LWWTYTSSIFFRIIFEAAFMYVF) threads the bilayer. At 155–192 (YFLYNGYHLPWVLKCGIDPCPNLVDCFISRPTEKTVFT) the chain is on the extracellular side. Residues 193-215 (VFMISASVICMLLNVAELCYLLL) form a helical membrane-spanning segment. At 216–261 (KLCFRRSKRTQAQRNHPNHALKESKQNEMNELISDSGQNAITSFPS) the chain is on the cytoplasmic side.

It belongs to the connexin family. Beta-type (group I) subfamily. In terms of assembly, a connexon is composed of a hexamer of connexins. Interacts with CNST. Highly expressed in adult brain and skin. Less in uterus, lung and eye. Very low in testis and sciatic nerve. No expression before birth.

The protein resides in the cell membrane. Its subcellular location is the cell junction. The protein localises to the gap junction. Functionally, one gap junction consists of a cluster of closely packed pairs of transmembrane channels, the connexons, through which materials of low MW diffuse from one cell to a neighboring cell. This is Gap junction beta-6 protein (Gjb6) from Mus musculus (Mouse).